We begin with the raw amino-acid sequence, 98 residues long: Large ribosomal subunit protein uL23 (98 aa).

It belongs to the universal ribosomal protein uL23 family. Part of the 50S ribosomal subunit. Contacts protein L29, and trigger factor when it is bound to the ribosome.

One of the early assembly proteins it binds 23S rRNA. One of the proteins that surrounds the polypeptide exit tunnel on the outside of the ribosome. Forms the main docking site for trigger factor binding to the ribosome. The polypeptide is Large ribosomal subunit protein uL23 (Frankia casuarinae (strain DSM 45818 / CECT 9043 / HFP020203 / CcI3)).